Here is a 453-residue protein sequence, read N- to C-terminus: Aldehyde dehydrogenase, dimeric NADP-preferring (453 aa).

At Ser2 the chain carries N-acetylserine. At Lys178 the chain carries N6-acetyllysine. 188–193 contacts NAD(+); that stretch reads GNTAVG. Residue Lys194 is modified to N6-acetyllysine. Residues Glu210 and Cys244 contribute to the active site.

The protein belongs to the aldehyde dehydrogenase family. As to quaternary structure, homodimer.

It is found in the cytoplasm. It carries out the reaction an aldehyde + NAD(+) + H2O = a carboxylate + NADH + 2 H(+). The enzyme catalyses octanal + NAD(+) + H2O = octanoate + NADH + 2 H(+). Its function is as follows. ALDHs play a major role in the detoxification of alcohol-derived acetaldehyde. They are involved in the metabolism of corticosteroids, biogenic amines, neurotransmitters, and lipid peroxidation. Oxidizes medium and long chain aldehydes into non-toxic fatty acids. Preferentially oxidizes aromatic aldehyde substrates. Comprises about 50 percent of corneal epithelial soluble proteins. May play a role in preventing corneal damage caused by ultraviolet light. This is Aldehyde dehydrogenase, dimeric NADP-preferring (ALDH3A1) from Canis lupus familiaris (Dog).